The following is a 652-amino-acid chain: Probable serine/threonine-protein kinase mkcD (652 aa).

3 disordered regions span residues M1–K47, N163–V198, and Q257–P289. Residues N182–D191 are compositionally biased toward gly residues. Residues K231–E275 adopt a coiled-coil conformation. Positions Q257–Q271 are enriched in low complexity. Over residues S279 to P289 the composition is skewed to polar residues. One can recognise a Protein kinase domain in the interval F369 to L626. Residues E375 to V383 and K403 each bind ATP. D494 functions as the Proton acceptor in the catalytic mechanism.

Belongs to the protein kinase superfamily. STE Ser/Thr protein kinase family. STE20 subfamily. Requires Mg(2+) as cofactor.

It catalyses the reaction L-seryl-[protein] + ATP = O-phospho-L-seryl-[protein] + ADP + H(+). It carries out the reaction L-threonyl-[protein] + ATP = O-phospho-L-threonyl-[protein] + ADP + H(+). The protein is Probable serine/threonine-protein kinase mkcD of Dictyostelium discoideum (Social amoeba).